A 123-amino-acid polypeptide reads, in one-letter code: Gamma-synuclein (123 aa).

2 consecutive repeat copies span residues 20–30 (EKTKQGVTEAA) and 31–41 (EKTKEGVMYVG). Residues 20 to 67 (EKTKQGVTEAAEKTKEGVMYVGTKTKENVVQSVTSVAEKTKEQANAVS) are 4 X 11 AA tandem repeats of [EGSA]-K-T-K-[EQ]-[GQ]-V-X(4). A 3; approximate repeat occupies 42–56 (TKTKENVVQSVTSVA). Repeat 4 spans residues 57 to 67 (EKTKEQANAVS). Phosphoserine is present on residues serine 67 and serine 72. Residues 91–123 (TTGVVRKEDLEPPAQDQEAKEQEENEEAKSGED) form a disordered region. Residues 107–123 (QEAKEQEENEEAKSGED) are compositionally biased toward basic and acidic residues. Phosphoserine; by BARK1, CaMK2 and CK2 is present on serine 120.

This sequence belongs to the synuclein family. May be a centrosome-associated protein. Interacts with MYOC; affects its secretion and its aggregation. Phosphorylated. Phosphorylation by GRK5 appears to occur on residues distinct from the residue phosphorylated by other kinases. As to expression, highly expressed in brain, particularly in the substantia nigra. Also expressed in the corpus callosum, heart, skeletal muscle, ovary, testis, colon and spleen. Weak expression in pancreas, kidney and lung. Expressed predominantly in the cell bodies and axons of primary sensory neurons, sympathetic neurons and motoneurons.

Its subcellular location is the cytoplasm. The protein resides in the perinuclear region. It localises to the cytoskeleton. It is found in the microtubule organizing center. The protein localises to the centrosome. Its subcellular location is the spindle. Plays a role in neurofilament network integrity. May be involved in modulating axonal architecture during development and in the adult. In vitro, increases the susceptibility of neurofilament-H to calcium-dependent proteases. May also function in modulating the keratin network in skin. Activates the MAPK and Elk-1 signal transduction pathway. The protein is Gamma-synuclein (Sncg) of Mus musculus (Mouse).